Here is a 431-residue protein sequence, read N- to C-terminus: Protein farnesyltransferase subunit beta (431 aa).

5 PFTB repeats span residues 130–171 (KRKI…SLCD), 182–224 (RKGI…TLLN), 231–273 (TEGV…AILR), 280–322 (VEKL…AILE), and 332–375 (KHAL…AVAE). (2E,6E)-farnesyl diphosphate contacts are provided by residues 258 to 261 (HGGY) and 301 to 304 (RSNK). Residues aspartate 307 and cysteine 309 each coordinate Zn(2+). 310–313 (YSFW) contributes to the (2E,6E)-farnesyl diphosphate binding site. Histidine 363 contacts Zn(2+).

This sequence belongs to the protein prenyltransferase subunit beta family. Heterodimer of an alpha (RAM2) and a beta (RAM1) subunit. The cofactor is Zn(2+).

It localises to the cytoplasm. The enzyme catalyses L-cysteinyl-[protein] + (2E,6E)-farnesyl diphosphate = S-(2E,6E)-farnesyl-L-cysteinyl-[protein] + diphosphate. In terms of biological role, catalyzes the transfer of a farnesyl moiety from farnesyl diphosphate to a cysteine at the fourth position from the C-terminus of several proteins having the C-terminal sequence Cys-aliphatic-aliphatic-X where X is Ser, Ala, Met, Cys, or Gln. Required for the membrane localization of proteins such as a-factor, Ras proteins and other membrane proteins containing the C-terminal CAAX motif. The beta subunit is responsible for isoprenoid and peptide-binding. This is Protein farnesyltransferase subunit beta from Saccharomyces cerevisiae (strain ATCC 204508 / S288c) (Baker's yeast).